The chain runs to 150 residues: Putative antitoxin VapB45 (150 aa).

Residues 124–150 (AQRPVAAGRPRPRPQRPVSDRVSDQRR) are disordered. The span at 141 to 150 (VSDRVSDQRR) shows a compositional bias: basic and acidic residues.

The protein belongs to the phD/YefM antitoxin family.

In terms of biological role, possibly the antitoxin component of a type II toxin-antitoxin (TA) system. Its cognate toxin is VapC45 (Potential). In Mycobacterium tuberculosis (strain CDC 1551 / Oshkosh), this protein is Putative antitoxin VapB45 (vapB45).